We begin with the raw amino-acid sequence, 352 residues long: Chorismate synthase (352 aa).

R48 lines the NADP(+) pocket. Residues 125 to 127 (RSS), 237 to 238 (NA), G278, 293 to 297 (KPTSS), and R319 each bind FMN.

Belongs to the chorismate synthase family. Homotetramer. Requires FMNH2 as cofactor.

It carries out the reaction 5-O-(1-carboxyvinyl)-3-phosphoshikimate = chorismate + phosphate. It functions in the pathway metabolic intermediate biosynthesis; chorismate biosynthesis; chorismate from D-erythrose 4-phosphate and phosphoenolpyruvate: step 7/7. In terms of biological role, catalyzes the anti-1,4-elimination of the C-3 phosphate and the C-6 proR hydrogen from 5-enolpyruvylshikimate-3-phosphate (EPSP) to yield chorismate, which is the branch point compound that serves as the starting substrate for the three terminal pathways of aromatic amino acid biosynthesis. This reaction introduces a second double bond into the aromatic ring system. This is Chorismate synthase from Francisella tularensis subsp. mediasiatica (strain FSC147).